The following is a 459-amino-acid chain: ATP-binding protein Uup-like (459 aa).

Residues 132 to 350 enclose the ABC transporter domain; that stretch reads FEMEDVSYEI…QQANFWASKA (219 aa). 164–171 is a binding site for ATP; sequence GPNGCGKT. Residues 357–375 are compositionally biased toward basic and acidic residues; sequence AKKSEPLKEESAVKNDRTS. Positions 357-381 are disordered; sequence AKKSEPLKEESAVKNDRTSKPKSVK.

This sequence belongs to the ABC transporter superfamily. ABCF family. Uup subfamily.

The protein localises to the cytoplasm. It catalyses the reaction ATP + H2O = ADP + phosphate + H(+). In terms of biological role, might play a role in ribosome assembly or function; this is missing the first ABC transporter domain compared to paralogs. In Haemophilus influenzae (strain ATCC 51907 / DSM 11121 / KW20 / Rd), this protein is ATP-binding protein Uup-like (uup-B).